A 353-amino-acid polypeptide reads, in one-letter code: Photosystem II protein D1 (353 aa).

Residue Thr-2 is modified to N-acetylthreonine. Position 2 is a phosphothreonine (Thr-2). 3 helical membrane passes run 29 to 46, 118 to 133, and 142 to 156; these read YIGW…TATS, HFFI…EWEL, and WIAV…AATA. Position 118 (His-118) interacts with chlorophyll a. Residue Tyr-126 participates in pheophytin a binding. [CaMn4O5] cluster-binding residues include Asp-170 and Glu-189. A helical transmembrane segment spans residues 197 to 218; the sequence is FHMLGVAGVFGGSLFSAMHGSL. Position 198 (His-198) interacts with chlorophyll a. Residues His-215 and 264–265 contribute to the a quinone site; that span reads SF. Residue His-215 coordinates Fe cation. Residue His-272 coordinates Fe cation. Residues 274–288 form a helical membrane-spanning segment; sequence FLAIWPVMGIWFTAL. [CaMn4O5] cluster-binding residues include His-332, Glu-333, Asp-342, and Ala-344. Residues 345 to 353 constitute a propeptide that is removed on maturation; the sequence is SVEAPSINA.

It belongs to the reaction center PufL/M/PsbA/D family. As to quaternary structure, PSII is composed of 1 copy each of membrane proteins PsbA, PsbB, PsbC, PsbD, PsbE, PsbF, PsbH, PsbI, PsbJ, PsbK, PsbL, PsbM, PsbT, PsbX, PsbY, PsbZ, Psb30/Ycf12, at least 3 peripheral proteins of the oxygen-evolving complex and a large number of cofactors. It forms dimeric complexes. The D1/D2 heterodimer binds P680, chlorophylls that are the primary electron donor of PSII, and subsequent electron acceptors. It shares a non-heme iron and each subunit binds pheophytin, quinone, additional chlorophylls, carotenoids and lipids. D1 provides most of the ligands for the Mn4-Ca-O5 cluster of the oxygen-evolving complex (OEC). There is also a Cl(-1) ion associated with D1 and D2, which is required for oxygen evolution. The PSII complex binds additional chlorophylls, carotenoids and specific lipids. serves as cofactor. Post-translationally, tyr-161 forms a radical intermediate that is referred to as redox-active TyrZ, YZ or Y-Z. In terms of processing, C-terminally processed by CTPA; processing is essential to allow assembly of the oxygen-evolving complex and thus photosynthetic growth.

The protein resides in the plastid. The protein localises to the chloroplast thylakoid membrane. It catalyses the reaction 2 a plastoquinone + 4 hnu + 2 H2O = 2 a plastoquinol + O2. Its function is as follows. Photosystem II (PSII) is a light-driven water:plastoquinone oxidoreductase that uses light energy to abstract electrons from H(2)O, generating O(2) and a proton gradient subsequently used for ATP formation. It consists of a core antenna complex that captures photons, and an electron transfer chain that converts photonic excitation into a charge separation. The D1/D2 (PsbA/PsbD) reaction center heterodimer binds P680, the primary electron donor of PSII as well as several subsequent electron acceptors. This chain is Photosystem II protein D1, found in Ostreococcus tauri.